Here is a 293-residue protein sequence, read N- to C-terminus: NAD kinase (293 aa).

D72 functions as the Proton acceptor in the catalytic mechanism. NAD(+) contacts are provided by residues 72 to 73 (DG), 146 to 147 (ND), R157, K174, D176, 187 to 192 (TAYALS), and Q247.

It belongs to the NAD kinase family. The cofactor is a divalent metal cation.

The protein resides in the cytoplasm. It catalyses the reaction NAD(+) + ATP = ADP + NADP(+) + H(+). Its function is as follows. Involved in the regulation of the intracellular balance of NAD and NADP, and is a key enzyme in the biosynthesis of NADP. Catalyzes specifically the phosphorylation on 2'-hydroxyl of the adenosine moiety of NAD to yield NADP. The chain is NAD kinase from Marinomonas sp. (strain MWYL1).